We begin with the raw amino-acid sequence, 333 residues long: Homeobox protein Hox-D13 (333 aa).

Positions 1 to 24 (MDGLRTDGGAAGAAPASSSSSSSV) are disordered. The segment covering 12–24 (GAAPASSSSSSSV) has biased composition (low complexity). The segment at residues 266–325 (GRKKRVPYTKLQLKELENEYAINKFINKDKRRRISAATNLSERQVTIWFQNRRVKDKKIV) is a DNA-binding region (homeobox).

It belongs to the Abd-B homeobox family.

Its subcellular location is the nucleus. Sequence-specific transcription factor that binds gene promoters and activates their transcription. Part of a developmental regulatory system that provides cells with specific positional identities on the anterior-posterior axis. The polypeptide is Homeobox protein Hox-D13 (HOXD13) (Carollia perspicillata (Seba's short-tailed bat)).